Consider the following 299-residue polypeptide: Oxygen-dependent coproporphyrinogen-III oxidase (299 aa).

Residue serine 92 coordinates substrate. Histidine 96 and histidine 106 together coordinate a divalent metal cation. The Proton donor role is filled by histidine 106. 108–110 serves as a coordination point for substrate; that stretch reads NVR. Positions 145 and 175 each coordinate a divalent metal cation. Positions 239-274 are important for dimerization; it reads YVEFNLVYDRGTLFGLQSGGRAESILMSLPPQVRWE. 257–259 lines the substrate pocket; that stretch reads GGR.

It belongs to the aerobic coproporphyrinogen-III oxidase family. Homodimer. A divalent metal cation is required as a cofactor.

It localises to the cytoplasm. The catalysed reaction is coproporphyrinogen III + O2 + 2 H(+) = protoporphyrinogen IX + 2 CO2 + 2 H2O. The protein operates within porphyrin-containing compound metabolism; protoporphyrin-IX biosynthesis; protoporphyrinogen-IX from coproporphyrinogen-III (O2 route): step 1/1. Functionally, involved in the heme biosynthesis. Catalyzes the aerobic oxidative decarboxylation of propionate groups of rings A and B of coproporphyrinogen-III to yield the vinyl groups in protoporphyrinogen-IX. The protein is Oxygen-dependent coproporphyrinogen-III oxidase of Xanthomonas campestris pv. campestris (strain 8004).